The chain runs to 493 residues: Guanosine-5'-triphosphate,3'-diphosphate pyrophosphatase (493 aa).

It belongs to the GppA/Ppx family. GppA subfamily.

The enzyme catalyses guanosine 3'-diphosphate 5'-triphosphate + H2O = guanosine 3',5'-bis(diphosphate) + phosphate + H(+). It functions in the pathway purine metabolism; ppGpp biosynthesis; ppGpp from GTP: step 2/2. Its function is as follows. Catalyzes the conversion of pppGpp to ppGpp. Guanosine pentaphosphate (pppGpp) is a cytoplasmic signaling molecule which together with ppGpp controls the 'stringent response', an adaptive process that allows bacteria to respond to amino acid starvation, resulting in the coordinated regulation of numerous cellular activities. The sequence is that of Guanosine-5'-triphosphate,3'-diphosphate pyrophosphatase from Salmonella heidelberg (strain SL476).